Reading from the N-terminus, the 260-residue chain is tRNA pseudouridine synthase A (260 aa).

Aspartate 52 functions as the Nucleophile in the catalytic mechanism. Tyrosine 110 is a substrate binding site.

It belongs to the tRNA pseudouridine synthase TruA family. Homodimer.

It catalyses the reaction uridine(38/39/40) in tRNA = pseudouridine(38/39/40) in tRNA. In terms of biological role, formation of pseudouridine at positions 38, 39 and 40 in the anticodon stem and loop of transfer RNAs. This chain is tRNA pseudouridine synthase A, found in Thiobacillus denitrificans (strain ATCC 25259 / T1).